The chain runs to 131 residues: Lymphocyte antigen 6C1 (131 aa).

Positions 1 to 26 (MDTSHTTKSCVLILLVALLCAERAQG) are cleaved as a signal peptide. The region spanning 27-115 (LQCYECYGVP…PTAGSTWTMA (89 aa)) is the UPAR/Ly6 domain. Disulfide bonds link cysteine 29/cysteine 53, cysteine 32/cysteine 41, cysteine 46/cysteine 74, cysteine 78/cysteine 95, and cysteine 96/cysteine 101. Residue glycine 109 is the site of GPI-anchor amidated glycine attachment. The propeptide at 110 to 131 (STWTMAGVLLFSLSSVVLQTLL) is removed in mature form.

It localises to the cell membrane. The protein is Lymphocyte antigen 6C1 (Ly6c1) of Mus musculus (Mouse).